The primary structure comprises 275 residues: Large ribosomal subunit protein uL2 (275 aa).

2 disordered regions span residues 38–59 (KKHAGRNNHGHITTRHRGGGHK) and 222–275 (GSAM…RKQK). Basic residues-rich tracts occupy residues 39–59 (KHAGRNNHGHITTRHRGGGHK) and 254–275 (MGKKTRHNPRTQRFIVRTRKQK).

Belongs to the universal ribosomal protein uL2 family. As to quaternary structure, part of the 50S ribosomal subunit. Forms a bridge to the 30S subunit in the 70S ribosome.

One of the primary rRNA binding proteins. Required for association of the 30S and 50S subunits to form the 70S ribosome, for tRNA binding and peptide bond formation. It has been suggested to have peptidyltransferase activity; this is somewhat controversial. Makes several contacts with the 16S rRNA in the 70S ribosome. This Herpetosiphon aurantiacus (strain ATCC 23779 / DSM 785 / 114-95) protein is Large ribosomal subunit protein uL2.